The chain runs to 136 residues: MIVGIGSDLCDIRRIARTLERHGARFTHRVFTDGERARCDRRAARAEGYARRFAAKEACAKALGTGLSAGVFWRDMEVVNLPSGQPTLRLAGGAAERLAELLPAGHAARLHVSLTDDPPMAQAFVIIEALPVSVAG.

Residues aspartate 8 and glutamate 57 each coordinate Mg(2+).

The protein belongs to the P-Pant transferase superfamily. AcpS family. Requires Mg(2+) as cofactor.

The protein resides in the cytoplasm. The enzyme catalyses apo-[ACP] + CoA = holo-[ACP] + adenosine 3',5'-bisphosphate + H(+). In terms of biological role, transfers the 4'-phosphopantetheine moiety from coenzyme A to a Ser of acyl-carrier-protein. This is Holo-[acyl-carrier-protein] synthase from Methylobacterium radiotolerans (strain ATCC 27329 / DSM 1819 / JCM 2831 / NBRC 15690 / NCIMB 10815 / 0-1).